A 175-amino-acid polypeptide reads, in one-letter code: Epididymal-specific lipocalin-8 (175 aa).

A signal peptide spans 1 to 22; it reads MEARLLSNVCGFFLVFLLQAES. Residues Asn-66 and Asn-74 are each glycosylated (N-linked (GlcNAc...) asparagine). Residues Cys-79 and Cys-166 are joined by a disulfide bond.

The protein belongs to the calycin superfamily. Lipocalin family. In terms of tissue distribution, predominantly expressed in epididymis.

It is found in the secreted. Its function is as follows. May play a role in male fertility. May act as a retinoid carrier protein within the epididymis. The polypeptide is Epididymal-specific lipocalin-8 (Lcn8) (Mus musculus (Mouse)).